Reading from the N-terminus, the 742-residue chain is Kanadaptin (742 aa).

Positions 1–16 are enriched in polar residues; it reads MADILSQSETLASQDL. Residues 1–112 form a disordered region; it reads MADILSQSET…PPWGGPATAP (112 aa). The segment covering 27–43 has biased composition (low complexity); that stretch reads VSPAARSKAPASSSSNP. The residue at position 28 (Ser28) is a Phosphoserine. The segment covering 72 to 82 has biased composition (basic and acidic residues); that stretch reads GDFRSLQEEQS. Ser90 carries the post-translational modification Phosphoserine. A compositionally biased stretch (pro residues) spans 96–106; it reads RAPPYQEPPWG. The FHA domain maps to 135 to 195; it reads CLFGRLSGCD…HGTFLNKTRI (61 aa). The tract at residues 254-282 is disordered; the sequence is LGEDSDEEEEMDTSERKINAGSQDDEMGC. The segment covering 256–265 has biased composition (acidic residues); that stretch reads EDSDEEEEMD. A phosphoserine mark is found at Ser258 and Ser412. Lys441 participates in a covalent cross-link: Glycyl lysine isopeptide (Lys-Gly) (interchain with G-Cter in SUMO2). Positions 443-476 form a coiled coil; that stretch reads ETFESLVAKLNDAERELSEISERLKASSQVLSES. Phosphoserine is present on Ser476. Residues 565 to 742 are disordered; that stretch reads LKTGTVGKLP…RTHLNDKYGY (178 aa). Over residues 591–606 the composition is skewed to acidic residues; that stretch reads PEVEEEEEEEEEEEKE. Basic and acidic residues predominate over residues 607-619; the sequence is KEEHEKKKLEDGS. Residues Ser655 and Ser658 each carry the phosphoserine modification. The span at 699-708 shows a compositional bias: low complexity; the sequence is PGPGKLPPTL. Residues 732 to 742 show a composition bias toward basic and acidic residues; sequence GRTHLNDKYGY.

In terms of tissue distribution, ubiquitously expressed.

It localises to the nucleus. Its subcellular location is the cytoplasm. The chain is Kanadaptin (SLC4A1AP) from Homo sapiens (Human).